Reading from the N-terminus, the 176-residue chain is Acireductone dioxygenase (176 aa).

Residues histidine 100, histidine 102, glutamate 106, and histidine 145 each coordinate Fe(2+). Residues histidine 100, histidine 102, glutamate 106, and histidine 145 each contribute to the Ni(2+) site.

The protein belongs to the acireductone dioxygenase (ARD) family. Monomer. Fe(2+) serves as cofactor. Ni(2+) is required as a cofactor.

The catalysed reaction is 1,2-dihydroxy-5-(methylsulfanyl)pent-1-en-3-one + O2 = 3-(methylsulfanyl)propanoate + CO + formate + 2 H(+). The enzyme catalyses 1,2-dihydroxy-5-(methylsulfanyl)pent-1-en-3-one + O2 = 4-methylsulfanyl-2-oxobutanoate + formate + 2 H(+). It participates in amino-acid biosynthesis; L-methionine biosynthesis via salvage pathway; L-methionine from S-methyl-5-thio-alpha-D-ribose 1-phosphate: step 5/6. Its function is as follows. Catalyzes 2 different reactions between oxygen and the acireductone 1,2-dihydroxy-3-keto-5-methylthiopentene (DHK-MTPene) depending upon the metal bound in the active site. Fe-containing acireductone dioxygenase (Fe-ARD) produces formate and 2-keto-4-methylthiobutyrate (KMTB), the alpha-ketoacid precursor of methionine in the methionine recycle pathway. Ni-containing acireductone dioxygenase (Ni-ARD) produces methylthiopropionate, carbon monoxide and formate, and does not lie on the methionine recycle pathway. The polypeptide is Acireductone dioxygenase (Bacillus pumilus (strain SAFR-032)).